Here is a 281-residue protein sequence, read N- to C-terminus: Protein NipSnap homolog 2 (281 aa).

The transit peptide at 1–27 (MAARVLLARGGLLRPAAQSAFLPGLRT) directs the protein to the mitochondrion.

It belongs to the NipSnap family. As to quaternary structure, interacts with CALCOCO2/NDP52, NBR1, SQSTM1/p62, TAX1BP1 and WDFY3/ALFY. Interacts with ATG8 family proteins (MAP1LC3A, MAP1LC3B, MAP1LC3C, GABARAP, GABARAPL1 and GABARAPL2). Interacts with VDAC1.

It is found in the mitochondrion matrix. The protein localises to the cytoplasm. Functionally, protein involved in mitophagy by facilitating recruitment of the autophagy machinery required for clearance of damaged mitochondria. Accumulates on the mitochondria surface in response to mitochondrial depolarization and acts as a 'eat me' signal by recruiting proteins involved in selective autophagy, such as autophagy receptors (CALCOCO2/NDP52, NBR1, SQSTM1/p62, TAX1BP1 and WDFY3/ALFY) and ATG8 family proteins (MAP1LC3A, MAP1LC3B, MAP1LC3C, GABARAP, GABARAPL1 and GABARAPL2). May act as a positive regulator of L-type calcium channels. The chain is Protein NipSnap homolog 2 from Mus musculus (Mouse).